The sequence spans 688 residues: Sodium channel and clathrin linker 1 (688 aa).

Residue A2 is modified to N-acetylalanine. Coiled-coil stretches lie at residues 59-108 (LIAE…AVEK) and 152-673 (QTAS…SVIT). At S681 the chain carries Phosphoserine.

In terms of assembly, interacts with SCN10A and clathrin. Identified in a complex containing SCN10A, clathrin and SCLT1.

The protein localises to the cytoplasm. It is found in the cytoskeleton. Its subcellular location is the microtubule organizing center. The protein resides in the centrosome. It localises to the centriole. Adapter protein that links SCN10A to clathrin. Regulates SCN10A channel activity, possibly by promoting channel internalization. This Mus musculus (Mouse) protein is Sodium channel and clathrin linker 1 (Sclt1).